A 654-amino-acid chain; its full sequence is Biotin-dependent 3-methylcrotonyl-coenzyme A carboxylase alpha1 subunit (654 aa).

One can recognise a Biotin carboxylation domain in the interval 1–448 (MFDTVLVANR…DTAVLDERSA (448 aa)). The ATP-grasp domain occupies 120 to 319 (KNAVAAFDVP…LVEWQLRVGA (200 aa)). Position 148–209 (148–209 (AAEVGYPVLI…ERFVLRPRHI (62 aa))) interacts with ATP. The Mg(2+) site is built by E275, E290, and N292. Mn(2+) is bound by residues E275, E290, and N292. The 76-residue stretch at 578–653 (HRAVGARPAE…KVEQVLARIK (76 aa)) folds into the Biotinyl-binding domain. K620 is subject to N6-biotinyllysine.

In terms of assembly, the biotin-dependent acyl-CoA carboxylase complex is composed of AccA1, which contains the biotin carboxylase (BC) and biotin carboxyl carrier protein (BCCP) domains, and AccD1, which contains the carboxyl transferase (CT) domain. The AccA1/AccD1 complex forms a dodecamer. Requires Mg(2+) as cofactor. Mn(2+) serves as cofactor. The cofactor is biotin.

The enzyme catalyses N(6)-biotinyl-L-lysyl-[protein] + hydrogencarbonate + ATP = N(6)-carboxybiotinyl-L-lysyl-[protein] + ADP + phosphate + H(+). Its pathway is amino-acid degradation; L-leucine degradation. In terms of biological role, component of a biotin-dependent acyl-CoA carboxylase complex. This subunit catalyzes the ATP-dependent carboxylation of the biotin carried by the biotin carboxyl carrier (BCC) domain, resulting in the formation of carboxyl biotin. When associated with the beta1 subunit AccD1, is involved in branched amino-acid catabolism with methylcrotonyl coenzyme A as the substrate. The protein is Biotin-dependent 3-methylcrotonyl-coenzyme A carboxylase alpha1 subunit (accA1) of Mycobacterium bovis (strain ATCC BAA-935 / AF2122/97).